A 215-amino-acid polypeptide reads, in one-letter code: 3-demethoxyubiquinol 3-hydroxylase (215 aa).

Residues Glu-64, Glu-94, His-97, Glu-146, Glu-178, and His-181 each coordinate Fe cation.

Belongs to the COQ7 family. It depends on Fe cation as a cofactor.

It is found in the cell membrane. It carries out the reaction a 5-methoxy-2-methyl-3-(all-trans-polyprenyl)benzene-1,4-diol + AH2 + O2 = a 3-demethylubiquinol + A + H2O. The protein operates within cofactor biosynthesis; ubiquinone biosynthesis. Catalyzes the hydroxylation of 2-nonaprenyl-3-methyl-6-methoxy-1,4-benzoquinol during ubiquinone biosynthesis. The polypeptide is 3-demethoxyubiquinol 3-hydroxylase (Azotobacter vinelandii (strain DJ / ATCC BAA-1303)).